The following is a 219-amino-acid chain: FMN-dependent NADH:quinone oxidoreductase 2 (219 aa).

FMN is bound by residues S10 and 23 to 25; that span reads SIS.

This sequence belongs to the azoreductase type 1 family. In terms of assembly, homodimer. Requires FMN as cofactor.

It catalyses the reaction 2 a quinone + NADH + H(+) = 2 a 1,4-benzosemiquinone + NAD(+). It carries out the reaction N,N-dimethyl-1,4-phenylenediamine + anthranilate + 2 NAD(+) = 2-(4-dimethylaminophenyl)diazenylbenzoate + 2 NADH + 2 H(+). Its function is as follows. Quinone reductase that provides resistance to thiol-specific stress caused by electrophilic quinones. In terms of biological role, also exhibits azoreductase activity. Catalyzes the reductive cleavage of the azo bond in aromatic azo compounds to the corresponding amines. The polypeptide is FMN-dependent NADH:quinone oxidoreductase 2 (Colwellia psychrerythraea (strain 34H / ATCC BAA-681) (Vibrio psychroerythus)).